The following is a 75-amino-acid chain: Small ribosomal subunit protein bS18 (75 aa).

This sequence belongs to the bacterial ribosomal protein bS18 family. In terms of assembly, part of the 30S ribosomal subunit. Forms a tight heterodimer with protein bS6.

Binds as a heterodimer with protein bS6 to the central domain of the 16S rRNA, where it helps stabilize the platform of the 30S subunit. The polypeptide is Small ribosomal subunit protein bS18 (Baumannia cicadellinicola subsp. Homalodisca coagulata).